A 570-amino-acid chain; its full sequence is Sulfite reductase [NADPH] hemoprotein beta-component (570 aa).

[4Fe-4S] cluster-binding residues include Cys-434, Cys-440, Cys-479, and Cys-483. Cys-483 is a siroheme binding site.

It belongs to the nitrite and sulfite reductase 4Fe-4S domain family. In terms of assembly, alpha(8)-beta(8). The alpha component is a flavoprotein, the beta component is a hemoprotein. It depends on siroheme as a cofactor. Requires [4Fe-4S] cluster as cofactor.

The enzyme catalyses hydrogen sulfide + 3 NADP(+) + 3 H2O = sulfite + 3 NADPH + 4 H(+). Its pathway is sulfur metabolism; hydrogen sulfide biosynthesis; hydrogen sulfide from sulfite (NADPH route): step 1/1. Component of the sulfite reductase complex that catalyzes the 6-electron reduction of sulfite to sulfide. This is one of several activities required for the biosynthesis of L-cysteine from sulfate. The chain is Sulfite reductase [NADPH] hemoprotein beta-component from Zymomonas mobilis subsp. mobilis (strain ATCC 31821 / ZM4 / CP4).